The sequence spans 159 residues: Phosphopantetheine adenylyltransferase (159 aa).

Thr10 contributes to the substrate binding site. Residues 10–11 (TF) and His18 contribute to the ATP site. Residues Lys42, Leu74, and Arg88 each coordinate substrate. ATP is bound by residues 89–91 (GMR), Glu99, and 124–130 (WSYVSST).

Belongs to the bacterial CoaD family. Homohexamer. Requires Mg(2+) as cofactor.

The protein localises to the cytoplasm. The enzyme catalyses (R)-4'-phosphopantetheine + ATP + H(+) = 3'-dephospho-CoA + diphosphate. It participates in cofactor biosynthesis; coenzyme A biosynthesis; CoA from (R)-pantothenate: step 4/5. In terms of biological role, reversibly transfers an adenylyl group from ATP to 4'-phosphopantetheine, yielding dephospho-CoA (dPCoA) and pyrophosphate. In Mannheimia succiniciproducens (strain KCTC 0769BP / MBEL55E), this protein is Phosphopantetheine adenylyltransferase.